A 737-amino-acid polypeptide reads, in one-letter code: MKVRVHELAKKYEIKNKEFLEILKKDIGITVTSHLSNLDEDQVNKIDDYFAKMNMLKVETVEPVKVHKEKKEEKPIRKIMDEDENDEGEGYSQKNNKKAKFQQTKNKKNNNITFEEDGNSHKNKGKKKKGRRTDFILKTVEATPDVVEEDGIKIIKFRGELTLGDFAEKLGVNSAEIIKKLFLKGQMLTINSPITLSMAEDLAADYDVLIEEEQEVELDFGEKFDLEIEDKAADLKERPPVITIMGHVDHGKTSLLDAIRTTNVVGGEAGGITQKIGAYQVERDGKRITFIDTPGHEAFTDMRARGAQVTDIAILVVAADDGVMPQTVEAISHAKVAKVPIIVAVNKIDKPEANPMKVKQELMEHGLVSAEWGGDVEFVEVSAKQKINLDGLLDTILITAEILELKGNNKKRAKGVVLESRLDPKIGPIADILVQEGTLKIGDVIVAGEVQGKVKALLNDKGERVNNATVSQPVEVIGFNNVPDAGDTMYVIQNEQHAKRIVEEVRKERKIQETTKKTISLESLSDQFKHEDLKELNLILRADSKGSVDALRDSLLKLSNDEVAVSIIQAASGAITESDVKLAEAAGAIIIGYNVRPTTKALKEAEVSKVEIRTSGIIYHITEDIEKALAGMLEPEYREEYLGRIEIKKVFKVSKVGNIAGCIVIDGKVKNDSNIRILRDNVVIYEGKLASLKRFKDDAKEVVAGQECGLGVENFNDIKDGDVVEAFEMVEVKRTLK.

A compositionally biased stretch (basic and acidic residues) spans 69 to 80 (EKKEEKPIRKIM). The interval 69 to 130 (EKKEEKPIRK…HKNKGKKKKG (62 aa)) is disordered. Composition is skewed to basic residues over residues 95 to 108 (NNKK…KNKK) and 121 to 130 (HKNKGKKKKG). Positions 237 to 404 (ERPPVITIMG…TILITAEILE (168 aa)) constitute a tr-type G domain. Residues 246-253 (GHVDHGKT) form a G1 region. 246-253 (GHVDHGKT) provides a ligand contact to GTP. Residues 271 to 275 (GITQK) are G2. The interval 292 to 295 (DTPG) is G3. GTP-binding positions include 292–296 (DTPGH) and 346–349 (NKID). The G4 stretch occupies residues 346–349 (NKID). The segment at 382–384 (SAK) is G5.

This sequence belongs to the TRAFAC class translation factor GTPase superfamily. Classic translation factor GTPase family. IF-2 subfamily.

It localises to the cytoplasm. Its function is as follows. One of the essential components for the initiation of protein synthesis. Protects formylmethionyl-tRNA from spontaneous hydrolysis and promotes its binding to the 30S ribosomal subunits. Also involved in the hydrolysis of GTP during the formation of the 70S ribosomal complex. The sequence is that of Translation initiation factor IF-2 from Fusobacterium nucleatum subsp. nucleatum (strain ATCC 25586 / DSM 15643 / BCRC 10681 / CIP 101130 / JCM 8532 / KCTC 2640 / LMG 13131 / VPI 4355).